We begin with the raw amino-acid sequence, 230 residues long: Octanoyltransferase (230 aa).

The 178-residue stretch at Ala-38–Leu-215 folds into the BPL/LPL catalytic domain. Residues Arg-76 to His-83, Ala-145 to Gly-147, and Gly-158 to Ala-160 each bind substrate. Cys-176 acts as the Acyl-thioester intermediate in catalysis.

This sequence belongs to the LipB family.

Its subcellular location is the cytoplasm. It catalyses the reaction octanoyl-[ACP] + L-lysyl-[protein] = N(6)-octanoyl-L-lysyl-[protein] + holo-[ACP] + H(+). The protein operates within protein modification; protein lipoylation via endogenous pathway; protein N(6)-(lipoyl)lysine from octanoyl-[acyl-carrier-protein]: step 1/2. Its function is as follows. Catalyzes the transfer of endogenously produced octanoic acid from octanoyl-acyl-carrier-protein onto the lipoyl domains of lipoate-dependent enzymes. Lipoyl-ACP can also act as a substrate although octanoyl-ACP is likely to be the physiological substrate. This is Octanoyltransferase from Mycobacterium bovis (strain BCG / Tokyo 172 / ATCC 35737 / TMC 1019).